A 561-amino-acid chain; its full sequence is Ribulokinase (561 aa).

This sequence belongs to the ribulokinase family.

It catalyses the reaction D-ribulose + ATP = D-ribulose 5-phosphate + ADP + H(+). It carries out the reaction L-ribulose + ATP = L-ribulose 5-phosphate + ADP + H(+). It functions in the pathway carbohydrate degradation; L-arabinose degradation via L-ribulose; D-xylulose 5-phosphate from L-arabinose (bacterial route): step 2/3. This Shouchella clausii (strain KSM-K16) (Alkalihalobacillus clausii) protein is Ribulokinase.